Here is a 265-residue protein sequence, read N- to C-terminus: Undecaprenyl-diphosphatase (265 aa).

The next 8 helical transmembrane spans lie at 1–21, 40–60, 87–107, 113–133, 151–173, 188–208, 214–234, and 244–264; these read MDWL…FLPI, GLAF…LAFH, WAVI…ENVI, ASLV…WADV, IIGF…TITA, SFLL…VELI, VAWG…WLCI, and IGML…LVWV.

Belongs to the UppP family.

The protein localises to the cell inner membrane. The enzyme catalyses di-trans,octa-cis-undecaprenyl diphosphate + H2O = di-trans,octa-cis-undecaprenyl phosphate + phosphate + H(+). In terms of biological role, catalyzes the dephosphorylation of undecaprenyl diphosphate (UPP). Confers resistance to bacitracin. This is Undecaprenyl-diphosphatase from Chromohalobacter salexigens (strain ATCC BAA-138 / DSM 3043 / CIP 106854 / NCIMB 13768 / 1H11).